The primary structure comprises 411 residues: BRO1 domain-containing protein BROX (411 aa).

In terms of domain architecture, BRO1 spans Phe-90–Met-395. Residues Thr-362–Ser-411 form a disordered region. Basic and acidic residues predominate over residues Leu-375–Lys-404. Position 408 is a cysteine methyl ester (Cys-408). Cys-408 is lipidated: S-farnesyl cysteine. Positions Gln-409–Ser-411 are cleaved as a propeptide — removed in mature form.

It belongs to the BROX family. In terms of processing, farnesylation is required for nuclear envelope localization.

The protein resides in the nucleus membrane. Its function is as follows. Nuclear envelope-associated factor that is involved in the nuclear envelope ruptures during interphase (NERDI) repair. The protein is BRO1 domain-containing protein BROX of Xenopus tropicalis (Western clawed frog).